Reading from the N-terminus, the 96-residue chain is MPGKIAVEVAYALPEKQYLQRVTLQEGATVEEAIRASGLLELRTDIDLTKNKVGIYSRPAKLSDIVHDGDRVEIYRPLIADPKELRRQRAEKSANK.

It belongs to the UPF0125 (RnfH) family.

This chain is Protein RnfH, found in Escherichia coli O127:H6 (strain E2348/69 / EPEC).